A 410-amino-acid chain; its full sequence is Phosphopentomutase (410 aa).

The Mn(2+) site is built by Asp-10, Asp-309, His-314, Asp-350, His-351, and His-362.

This sequence belongs to the phosphopentomutase family. It depends on Mn(2+) as a cofactor.

Its subcellular location is the cytoplasm. The enzyme catalyses 2-deoxy-alpha-D-ribose 1-phosphate = 2-deoxy-D-ribose 5-phosphate. The catalysed reaction is alpha-D-ribose 1-phosphate = D-ribose 5-phosphate. The protein operates within carbohydrate degradation; 2-deoxy-D-ribose 1-phosphate degradation; D-glyceraldehyde 3-phosphate and acetaldehyde from 2-deoxy-alpha-D-ribose 1-phosphate: step 1/2. Its function is as follows. Isomerase that catalyzes the conversion of deoxy-ribose 1-phosphate (dRib-1-P) and ribose 1-phosphate (Rib-1-P) to deoxy-ribose 5-phosphate (dRib-5-P) and ribose 5-phosphate (Rib-5-P), respectively. This is Phosphopentomutase from Aliivibrio fischeri (strain ATCC 700601 / ES114) (Vibrio fischeri).